Here is a 2190-residue protein sequence, read N- to C-terminus: Non-reducing polyketide synthase mapC' (2190 aa).

The tract at residues 14–268 (VLFGPQCPDI…HHEAHREGIQ (255 aa)) is N-terminal acylcarrier protein transacylase domain (SAT). The Ketosynthase family 3 (KS3) domain maps to 401–817 (ASPIAITGMA…GSNAALIVKE (417 aa)). Active-site for beta-ketoacyl synthase activity residues include cysteine 566, histidine 701, and histidine 740. Residues 893–1190 (CFGGQNGLTA…NVTSALWAQG (298 aa)) are malonyl-CoA:ACP transacylase (MAT) domain. Serine 979 functions as the For acyl/malonyl transferase activity in the catalytic mechanism. The N-terminal hotdog fold stretch occupies residues 1243 to 1375 (GQEAGLLCQL…GTVCLHQERS (133 aa)). The region spanning 1243–1552 (GQEAGLLCQL…FTSVSIRSLT (310 aa)) is the PKS/mFAS DH domain. Residues 1251-1556 (QLSESPDERL…SIRSLTRALA (306 aa)) form a product template (PT) domain region. Histidine 1277 (proton acceptor; for dehydratase activity) is an active-site residue. A C-terminal hotdog fold region spans residues 1401–1552 (ASNGLKGSTV…FTSVSIRSLT (152 aa)). Aspartate 1458 (proton donor; for dehydratase activity) is an active-site residue. The Carrier domain maps to 1597-1671 (ANDLATVQEM…GLVEHIFPGH (75 aa)). At serine 1631 the chain carries O-(pantetheine 4'-phosphoryl)serine. Positions 1840–2187 (ATMSPSKPIK…AEGYEFLRTH (348 aa)) are methyltransferase (CMeT) domain. Catalysis depends on for thioesterase activity residues serine 1969, aspartate 2127, and histidine 2159.

It localises to the cytoplasm. The protein localises to the cytosol. The catalysed reaction is 3 malonyl-CoA + acetyl-CoA + S-adenosyl-L-methionine + H(+) = 5-methylorsellinate + S-adenosyl-L-homocysteine + 3 CO2 + 4 CoA. Its pathway is secondary metabolite biosynthesis; terpenoid biosynthesis. In terms of biological role, non-reducing polyketide synthase; part of the gene cluster that mediates the biosynthesis of mycophenolic acid (MPA), the first isolated antibiotic natural product in the world obtained from a culture of Penicillium brevicompactum in 1893. MpaC' catalyzes the synthesis of 5-methylorsellinic acid (5MOA) via the condensation of 1 acetyl-CoA starter unit with 3 malonyl-CoA units and one methylation step. The first step of the pathway is the synthesis of 5-methylorsellinic acid (5MOA) by the cytosolic polyketide synthase mpaC. 5MOA is then converted to the phthalide compound 5,7-dihydroxy-4,6-dimethylphthalide (DHMP) by the endoplasmic reticulum-bound cytochrome P450 monooxygenase mpaDE. MpaDE first catalyzes hydroxylation of 5-MOA to 4,6-dihydroxy-2-(hydroxymethyl)-3-methylbenzoic acid (DHMB). MpaDE then acts as a lactone synthase that catalyzes the ring closure to convert DHMB into DHMP. The next step is the prenylation of DHMP by the Golgi apparatus-associated prenyltransferase mpaA to yield farnesyl-DHMP (FDHMP). The ER-bound oxygenase mpaB then mediates the oxidative cleavage the C19-C20 double bond in FDHMP to yield FDHMP-3C via a mycophenolic aldehyde intermediate. The O-methyltransferase mpaG catalyzes the methylation of FDHMP-3C to yield MFDHMP-3C. After the cytosolic methylation of FDHMP-3C, MFDHMP-3C enters into peroxisomes probably via free diffusion due to its low molecular weight. Upon a peroxisomal CoA ligation reaction, catalyzed by a beta-oxidation component enzyme acyl-CoA ligase ACL891, MFDHMP-3C-CoA would then be restricted to peroxisomes for the following beta-oxidation pathway steps. The peroxisomal beta-oxidation machinery than converts MFDHMP-3C-CoA into MPA_CoA, via a beta-oxidation chain-shortening process. Finally mpaH acts as a peroxisomal acyl-CoA hydrolase with high substrate specificity toward MPA-CoA to release the final product MPA. The sequence is that of Non-reducing polyketide synthase mapC' from Penicillium brevicompactum.